A 149-amino-acid polypeptide reads, in one-letter code: Putative eggshell protein (149 aa).

Tandem repeats lie at residues 1-5 (YGYDK), 6-10 (YGYDK), 11-15 (YGYDK), 16-20 (YGYDK), 21-25 (YGYDK), and 26-30 (YGYEK). The 13 X 5 AA approximate tandem repeats of Y-G-Y-[DE]-K stretch occupies residues 1–64 (YGYDKYGYDK…YGYDKYGDDK (64 aa)). The 7; truncated repeat unit spans residues 31 to 34 (GYDK). 3 repeat units span residues 35–39 (YGYDK), 40–44 (YGYEK), and 45–49 (YGYDK). An 11; approximate repeat occupies 50-54 (YGNEK). Repeat unit 12 spans residues 55–59 (YGYDK). The stretch at 60 to 64 (YGDDK) is one 13; approximate repeat. Positions 105-124 (YRKDHDKHDHDEHDHHDDHH) are enriched in basic and acidic residues. Positions 105–149 (YRKDHDKHDHDEHDHHDDHHDHRHHHHEHDHHHHHEHDHKNGKGY) are disordered. Residues 125 to 141 (DHRHHHHEHDHHHHHEH) are compositionally biased toward basic residues.

This is Putative eggshell protein from Schistosoma mansoni (Blood fluke).